The chain runs to 309 residues: MTVTVKMLVDKLKLKVVYGNEELLAKAITTADISRPGLEMVGYFDYYSPERLQLVGMKEWTYLKTMTANNRYSVFANIFREETPAVIVARGLEIPEEMLQAAKENGVAVLQGRNSTSSLSGDMSWYLNSQLAERTSVHGVLVDIYGMGVLIQGDSGIGKSETALELVKRGHRLVADDRVDVYAKDEGTLWGEPAEILLHLLEIRGVGIIDVMSLYGASAVRDSSQVQLCICLEHFENDEVFDRLGNSNEEIELQGVKIPRIRIPVKTGRNVSVVIEAAAMNYRAKQMGYDATKTFKDRLTDLISKNGED.

Active-site residues include histidine 138 and lysine 159. 153-160 (GDSGIGKS) is an ATP binding site. Serine 160 contributes to the Mg(2+) binding site. Catalysis depends on aspartate 177, which acts as the Proton acceptor; for phosphorylation activity. Proton donor; for dephosphorylation activity. Residues 201–210 (LEIRGVGIID) form an important for the catalytic mechanism of both phosphorylation and dephosphorylation region. Glutamate 202 lines the Mg(2+) pocket. The active site involves arginine 243. The important for the catalytic mechanism of dephosphorylation stretch occupies residues 264–269 (PVKTGR).

It belongs to the HPrK/P family. Homohexamer. The cofactor is Mg(2+).

It carries out the reaction [HPr protein]-L-serine + ATP = [HPr protein]-O-phospho-L-serine + ADP + H(+). It catalyses the reaction [HPr protein]-O-phospho-L-serine + phosphate + H(+) = [HPr protein]-L-serine + diphosphate. In terms of biological role, catalyzes the ATP- as well as the pyrophosphate-dependent phosphorylation of a specific serine residue in HPr, a phosphocarrier protein of the phosphoenolpyruvate-dependent sugar phosphotransferase system (PTS). HprK/P also catalyzes the pyrophosphate-producing, inorganic phosphate-dependent dephosphorylation (phosphorolysis) of seryl-phosphorylated HPr (P-Ser-HPr). The two antagonistic activities of HprK/P are regulated by several intracellular metabolites, which change their concentration in response to the absence or presence of rapidly metabolisable carbon sources (glucose, fructose, etc.) in the growth medium. Therefore, by controlling the phosphorylation state of HPr, HPrK/P is a sensor enzyme that plays a major role in the regulation of carbon metabolism and sugar transport: it mediates carbon catabolite repression (CCR), and regulates PTS-catalyzed carbohydrate uptake and inducer exclusion. This chain is HPr kinase/phosphorylase, found in Streptococcus thermophilus (strain ATCC BAA-250 / LMG 18311).